Here is a 126-residue protein sequence, read N- to C-terminus: Copper resistance protein C (126 aa).

Residues 1–24 (MLLNRTSFVTLFAAGMLVSALAQA) form the signal peptide. H25 contacts Cu(2+). Cu(+) is bound by residues M64, M67, M70, H72, and M75. H115 contributes to the Cu(2+) binding site.

The protein belongs to the CopC family. In terms of assembly, monomer.

The protein localises to the periplasm. With respect to regulation, the redox state of copper bound to CopC may act as a switch between the possible trafficking pathways of the metal ion. Its function is as follows. Copper-binding protein involved in copper resistance and homeostasis. Probably mediates copper resistance by sequestering the excess of copper in the periplasm. May act as a copper carrier in the oxidizing periplasmic space that exchanges either Cu(I) or Cu(II) with its putative partners CopA, CopB and CopD. The protein is Copper resistance protein C of Pseudomonas syringae pv. tomato.